Here is a 313-residue protein sequence, read N- to C-terminus: MMENYKHTTVLLDEAVNGLNIRPDGIYIDGTFGRGGHSRLILSQLGEEGRLLAIDRDPQAIAVAKTIDDPRFSIIHGPFSALGEYVAERDLIGKIDGILLDLGVSSPQLDDAERGFSFMRDGPLDMRMDPTRGQSAAEWLQTAEEADIAWVLKTYGEERFAKRIARAIVERNREQPMTRTKELAEVVAVATPVKDKFKHPATRTFQAVRIWVNSELEEIEQALKSSLNVLAPGGRLSIISFHSLEDRIVKRFMRENSRGPQVPAGLPMTEEQLKKLGGRQLRALGKLMPGEEEVAENPRARSSVLRIAERTNA.

S-adenosyl-L-methionine-binding positions include 35–37 (GGH), D55, F79, D101, and Q108.

This sequence belongs to the methyltransferase superfamily. RsmH family.

Its subcellular location is the cytoplasm. The catalysed reaction is cytidine(1402) in 16S rRNA + S-adenosyl-L-methionine = N(4)-methylcytidine(1402) in 16S rRNA + S-adenosyl-L-homocysteine + H(+). Specifically methylates the N4 position of cytidine in position 1402 (C1402) of 16S rRNA. This chain is Ribosomal RNA small subunit methyltransferase H, found in Shigella sonnei (strain Ss046).